The following is a 152-amino-acid chain: Protein Smg homolog (152 aa).

It belongs to the Smg family.

This Nitrosomonas europaea (strain ATCC 19718 / CIP 103999 / KCTC 2705 / NBRC 14298) protein is Protein Smg homolog.